An 82-amino-acid polypeptide reads, in one-letter code: UPF0298 protein SMU_1670c (82 aa).

This sequence belongs to the UPF0298 family.

It localises to the cytoplasm. The chain is UPF0298 protein SMU_1670c from Streptococcus mutans serotype c (strain ATCC 700610 / UA159).